The primary structure comprises 185 residues: Small ribosomal subunit protein uS7 (185 aa).

The protein belongs to the universal ribosomal protein uS7 family. As to quaternary structure, part of the 30S ribosomal subunit.

One of the primary rRNA binding proteins, it binds directly to 16S rRNA where it nucleates assembly of the head domain of the 30S subunit. Is located at the subunit interface close to the decoding center. The chain is Small ribosomal subunit protein uS7 from Methanothrix thermoacetophila (strain DSM 6194 / JCM 14653 / NBRC 101360 / PT) (Methanosaeta thermophila).